The following is a 223-amino-acid chain: Urease accessory protein UreF (223 aa).

It belongs to the UreF family. UreD, UreF and UreG form a complex that acts as a GTP-hydrolysis-dependent molecular chaperone, activating the urease apoprotein by helping to assemble the nickel containing metallocenter of UreC. The UreE protein probably delivers the nickel.

It is found in the cytoplasm. Required for maturation of urease via the functional incorporation of the urease nickel metallocenter. This Paenarthrobacter aurescens (strain TC1) protein is Urease accessory protein UreF.